The following is a 234-amino-acid chain: BTB/POZ domain-containing protein KCTD5 (234 aa).

The residue at position 2 (Ala2) is an N-acetylalanine. Ser10 is modified (phosphoserine). Residues 44-146 (KWVRLNVGGT…LVKDKIRERD (103 aa)) enclose the BTB domain. The disordered stretch occupies residues 213–234 (PYGTASEPSEKAKILQERGSRM). Basic and acidic residues predominate over residues 220 to 234 (PSEKAKILQERGSRM).

Homopentamer. Interacts (via C-terminus) with GRASP55/GORASP2. Interacts with CUL3 and with ubiquitinated proteins. Interacts with CRY1. As to quaternary structure, (Microbial infection) Interacts with adeno-associated virus 2 (AAV-2) REP proteins.

The protein resides in the cytoplasm. It localises to the cytosol. Its subcellular location is the nucleus. Its interaction with CUL3 suggests that it may act as a substrate adapter in some E3 ligase complex. Does not affect the function of Kv channel Kv2.1/KCNB1, Kv1.2/KCNA2, Kv4.2/KCND2 and Kv3.4/KCNC4. The protein is BTB/POZ domain-containing protein KCTD5 (KCTD5) of Homo sapiens (Human).